The sequence spans 111 residues: Latartoxin-2b (111 aa).

An N-terminal signal peptide occupies residues 1–19 (MKVLVIIALCFFILQTALS). The propeptide at 20 to 43 (EDKYESFESYVEDLKSGNMKGEAR) is removed in mature form. A Processing quadruplet motif motif is present at residues 40–43 (GEAR). Disulfide bonds link Cys45-Cys62, Cys52-Cys73, Cys61-Cys87, Cys75-Cys85, and Cys78-Cys99. Val110 is subject to Valine amide.

It belongs to the neurotoxin 19 (CSTX) family. 11 (latartoxin) subfamily. Contains 5 disulfide bonds. In terms of processing, cleavage of the propeptide depends on the processing quadruplet motif (XXXR, with at least one of X being E). As to expression, expressed by the venom gland.

It is found in the secreted. Its function is as follows. Insect toxin. The protein is Latartoxin-2b of Lachesana tarabaevi (Spider).